The primary structure comprises 537 residues: Chaperonin GroEL (537 aa).

Residues 29–32 (TLGP), 86–90 (DGTTT), Gly413, and Asp492 each bind ATP.

Belongs to the chaperonin (HSP60) family. Forms a cylinder of 14 subunits composed of two heptameric rings stacked back-to-back. Interacts with the co-chaperonin GroES.

It is found in the cytoplasm. The catalysed reaction is ATP + H2O + a folded polypeptide = ADP + phosphate + an unfolded polypeptide.. Its function is as follows. Together with its co-chaperonin GroES, plays an essential role in assisting protein folding. The GroEL-GroES system forms a nano-cage that allows encapsulation of the non-native substrate proteins and provides a physical environment optimized to promote and accelerate protein folding. The protein is Chaperonin GroEL of Dehalococcoides mccartyi (strain ATCC BAA-2266 / KCTC 15142 / 195) (Dehalococcoides ethenogenes (strain 195)).